A 540-amino-acid chain; its full sequence is Glucose-6-phosphate isomerase (540 aa).

Glu350 (proton donor) is an active-site residue. Active-site residues include His381 and Lys503.

This sequence belongs to the GPI family.

The protein resides in the cytoplasm. It carries out the reaction alpha-D-glucose 6-phosphate = beta-D-fructose 6-phosphate. It participates in carbohydrate biosynthesis; gluconeogenesis. The protein operates within carbohydrate degradation; glycolysis; D-glyceraldehyde 3-phosphate and glycerone phosphate from D-glucose: step 2/4. Functionally, catalyzes the reversible isomerization of glucose-6-phosphate to fructose-6-phosphate. This is Glucose-6-phosphate isomerase from Burkholderia lata (strain ATCC 17760 / DSM 23089 / LMG 22485 / NCIMB 9086 / R18194 / 383).